A 104-amino-acid chain; its full sequence is Protein U9 (104 aa).

The chain is Protein U9 (U9) from Homo sapiens (Human).